The following is a 185-amino-acid chain: Probable chorismate pyruvate-lyase (185 aa).

3 residues coordinate substrate: arginine 75, leucine 113, and glutamate 170.

The protein belongs to the UbiC family.

The protein localises to the cytoplasm. It catalyses the reaction chorismate = 4-hydroxybenzoate + pyruvate. It functions in the pathway cofactor biosynthesis; ubiquinone biosynthesis. Functionally, removes the pyruvyl group from chorismate, with concomitant aromatization of the ring, to provide 4-hydroxybenzoate (4HB) for the ubiquinone pathway. The protein is Probable chorismate pyruvate-lyase of Coxiella burnetii (strain RSA 493 / Nine Mile phase I).